Here is a 709-residue protein sequence, read N- to C-terminus: Solute carrier organic anion transporter family member 2B1 (709 aa).

The disordered stretch occupies residues 1–38 (MGPRIGPAGEVPQVPDKETKATMGTENTPGGKASPDPQ). At 1–49 (MGPRIGPAGEVPQVPDKETKATMGTENTPGGKASPDPQDVRPSVFHNIK) the chain is on the cytoplasmic side. The residue at position 34 (serine 34) is a Phosphoserine. Residues 50-69 (LFVLCHSLLQLAQLMISGYL) traverse the membrane as a helical segment. The segment at 51–69 (FVLCHSLLQLAQLMISGYL) is required for E1S and taurocholate transport; required for transporter stability. The Extracellular portion of the chain corresponds to 70–88 (KSSISTVEKRFGLSSQTSG). The chain crosses the membrane as a helical span at residues 89 to 109 (LLASFNEVGNTALIVFVSYFG). At 110 to 115 (SRVHRP) the chain is on the cytoplasmic side. The chain crosses the membrane as a helical span at residues 116–140 (RMIGYGAILVALAGLLMTLPHFISE). Topologically, residues 141 to 185 (PYRYDNTSPEDMPQDFKASLCLPTTSAPASAPSNGNCSSYTETQH) are extracellular. Asparagine 176 carries N-linked (GlcNAc...) asparagine glycosylation. A helical membrane pass occupies residues 186–215 (LSVVGIMFVAQTLLGVGGVPIQPFGISYID). Residues 216–234 (DFAHNSNSPLYLGILFAVT) are Cytoplasmic-facing. The helical transmembrane segment at 235-255 (MMGPGLAFGLGSLMLRLYVDI) threads the bilayer. At 256–273 (NQMPEGGISLTIKDPRWV) the chain is on the extracellular side. The chain crosses the membrane as a helical span at residues 274 to 298 (GAWWLGFLIAAGAVALAAIPYFFFP). Residues 299-366 (KEMPKEKREL…IKVFPRVLLQ (68 aa)) are Cytoplasmic-facing. Threonine 318 is modified (phosphothreonine). The disordered stretch occupies residues 319 to 342 (DSPARKGKDSPSKQSPGESTKKQD). At serine 320 the chain carries Phosphoserine. Residues 367–388 (TLRHPIFLLVVLSQVCLSSMAA) traverse the membrane as a helical segment. Residues 389–408 (GMATFLPKFLERQFSITASY) are Extracellular-facing. A helical transmembrane segment spans residues 409-432 (ANLLIGCLSFPSVIVGIVVGGVLV). The Cytoplasmic segment spans residues 433-436 (KRLH). Residues 437–460 (LGPVGCGALCLLGMLLCLFFSLPL) traverse the membrane as a helical segment. Topologically, residues 461–564 (FFIGCSSHQI…STCSHLVVPF (104 aa)) are extracellular. Positions 483–543 (LELSPSCMEA…VFYTNCSCVV (61 aa)) constitute a Kazal-like domain. 3 disulfide bridges follow: cysteine 489/cysteine 520, cysteine 495/cysteine 516, and cysteine 504/cysteine 541. Asparagine 538 carries an N-linked (GlcNAc...) asparagine glycan. The helical transmembrane segment at 565-587 (LLLVSLGSALACLTHTPSFMLIL) threads the bilayer. At 588-596 (RGVKKEDKT) the chain is on the cytoplasmic side. A helical transmembrane segment spans residues 597–622 (LAVGIQFMFLRILAWMPSPVIHGSAI). At 623 to 655 (DTTCVHWALSCGRRAVCRYYNNDLLRNRFIGLQ) the chain is on the extracellular side. The chain crosses the membrane as a helical span at residues 656 to 673 (FFFKTGSVICFALVLAVL). Topologically, residues 674–709 (RQQDKEARTKESRSSPAVEQQLLVSGPGKKPEDSRV) are cytoplasmic. The disordered stretch occupies residues 679 to 709 (EARTKESRSSPAVEQQLLVSGPGKKPEDSRV).

This sequence belongs to the organo anion transporter (TC 2.A.60) family. Strongly expressed in the liver, at the sinusoidal membrane of the hepatocytes. Expressed in the kidney. Expressed in placental trophoblasts and syncytiotrophoblast. Expressed in the small intestine. Expressed in the blood-brain barrier, in endothelial cells of brain capillaries. Expressed in the retina, in the inner nuclear layer and the inner plexiform layer. Expressed in skelettal muscles. In testis, primarily localized to the basal membrane of Sertoli cells and weakly expressed within the tubules. Also expressed in pancreas, lung, heart, colon, ovary and spleen. Expressed in fetal brain, heart, kidney, liver, lung, skeletal muscle, spleen and pancreas. In terms of tissue distribution, highest expression in brain. Predominant isoform compared to isoform 3 in small intestine duodenum, kidney, placenta, and skeletal muscle. As to expression, predominant isoform compared to isoform 1 in liver. Also expressed in small intestine duodenum, kidney, brain, placenta, and skeletal muscle.

It localises to the cell membrane. The protein resides in the basal cell membrane. It is found in the basolateral cell membrane. The protein localises to the apical cell membrane. The catalysed reaction is dehydroepiandrosterone 3-sulfate(out) = dehydroepiandrosterone 3-sulfate(in). It catalyses the reaction estrone 3-sulfate(out) = estrone 3-sulfate(in). It carries out the reaction estrone 3-sulfate(out) + hydrogencarbonate(in) = estrone 3-sulfate(in) + hydrogencarbonate(out). The enzyme catalyses taurocholate(out) = taurocholate(in). The catalysed reaction is coproporphyrin III(out) = coproporphyrin III(in). It catalyses the reaction substance P(out) = substance P(in). It carries out the reaction pregnenolone sulfate(out) = pregnenolone sulfate(in). The enzyme catalyses prostaglandin E2(out) = prostaglandin E2(in). The catalysed reaction is prostaglandin D2(out) = prostaglandin D2(in). It catalyses the reaction L-thyroxine(out) = L-thyroxine(in). With respect to regulation, E1S, DHEA-S and PregS transports are regulated by steroid hormones. In the case of testosterone, transport of E1S and DHEA-S was inhibited, whereas progesterone stimulated E1S, DHEA-S and PregS uptake. Progesterone stimulates high-affinity uptake of E1S whereas it inhibits low-affinity uptake of E1S. Progesterone doesn't affect the uptake of PGE2. Functionally, mediates the Na(+)-independent transport of steroid sulfate conjugates and other specific organic anions. Responsible for the transport of estrone 3-sulfate (E1S) through the basal membrane of syncytiotrophoblast, highlighting a potential role in the placental absorption of fetal-derived sulfated steroids including the steroid hormone precursor dehydroepiandrosterone sulfate (DHEA-S). Also facilitates the uptake of sulfated steroids at the basal/sinusoidal membrane of hepatocytes, therefore accounting for the major part of organic anions clearance of liver. Mediates the intestinal uptake of sulfated steroids. Mediates the uptake of the neurosteroids DHEA-S and pregnenolone sulfate (PregS) into the endothelial cells of the blood-brain barrier as the first step to enter the brain. Also plays a role in the reuptake of neuropeptides such as substance P/TAC1 and vasoactive intestinal peptide/VIP released from retinal neurons. May act as a heme transporter that promotes cellular iron availability via heme oxygenase/HMOX2 and independently of TFRC. Also transports heme by-product coproporphyrin III (CPIII), and may be involved in their hepatic disposition. Mediates the uptake of other substrates such as prostaglandins D2 (PGD2), E1 (PGE1) and E2 (PGE2), taurocholate, L-thyroxine, leukotriene C4 and thromboxane B2. May contribute to regulate the transport of organic compounds in testis across the blood-testis-barrier. Shows a pH-sensitive substrate specificity which may be ascribed to the protonation state of the binding site and leads to a stimulation of substrate transport in an acidic microenvironment. The exact transport mechanism has not been yet deciphered but most likely involves an anion exchange, coupling the cellular uptake of organic substrate with the efflux of an anionic compound. Hydrogencarbonate/HCO3(-) acts as a probable counteranion that exchanges for organic anions. Cytoplasmic glutamate may also act as counteranion in the placenta. An inwardly directed proton gradient has also been proposed as the driving force of E1S uptake with a (H(+):E1S) stoichiometry of (1:1). Has estrone 3-sulfate (E1S) transport activity comparable with the full-length isoform 1. The polypeptide is Solute carrier organic anion transporter family member 2B1 (Homo sapiens (Human)).